The sequence spans 227 residues: Translation initiation factor 6 (227 aa).

The protein belongs to the eIF-6 family.

Its function is as follows. Binds to the 50S ribosomal subunit and prevents its association with the 30S ribosomal subunit to form the 70S initiation complex. The sequence is that of Translation initiation factor 6 from Methanococcus aeolicus (strain ATCC BAA-1280 / DSM 17508 / OCM 812 / Nankai-3).